A 486-amino-acid chain; its full sequence is CUGBP Elav-like family member 1 (486 aa).

Residue Met1 is modified to N-acetylmethionine. The residue at position 4 (Thr4) is a Phosphothreonine. RRM domains are found at residues 16 to 99 (IKMF…PADS) and 108 to 188 (RKLF…FADT). A Glycyl lysine isopeptide (Lys-Gly) (interchain with G-Cter in SUMO2) cross-link involves residue Lys109. Ser179 and Ser302 each carry phosphoserine. The disordered stretch occupies residues 277-309 (TPSGTNALTTSSSPLSVLTSSGSSPSSSSSNSV). Positions 284–309 (LTTSSSPLSVLTSSGSSPSSSSSNSV) are enriched in low complexity. Residues 401–479 (ANLFIYHLPQ…KRLKVQLKRS (79 aa)) form the RRM 3 domain.

It belongs to the CELF/BRUNOL family. In terms of assembly, component of an EIF2 complex at least composed of CELF1/CUGBP1, CALR, CALR3, EIF2S1, EIF2S2, HSP90B1 and HSPA5. Associates with polysomes. Interacts with HNRNPH1; the interaction in RNA-dependent. Interacts with PARN. Post-translationally, phosphorylated. Its phosphorylation status increases in senescent cells. As to expression, ubiquitous.

It localises to the nucleus. Its subcellular location is the cytoplasm. Functionally, RNA-binding protein implicated in the regulation of several post-transcriptional events. Involved in pre-mRNA alternative splicing, mRNA translation and stability. Mediates exon inclusion and/or exclusion in pre-mRNA that are subject to tissue-specific and developmentally regulated alternative splicing. Specifically activates exon 5 inclusion of cardiac isoforms of TNNT2 during heart remodeling at the juvenile to adult transition. Acts both as an activator and as a repressor of a pair of coregulated exons: promotes inclusion of the smooth muscle (SM) exon but exclusion of the non-muscle (NM) exon in actinin pre-mRNAs. Activates SM exon 5 inclusion by antagonizing the repressive effect of PTB. Promotes exclusion of exon 11 of the INSR pre-mRNA. Inhibits, together with HNRNPH1, insulin receptor (IR) pre-mRNA exon 11 inclusion in myoblast. Increases translation and controls the choice of translation initiation codon of CEBPB mRNA. Increases mRNA translation of CEBPB in aging liver. Increases translation of CDKN1A mRNA by antagonizing the repressive effect of CALR3. Mediates rapid cytoplasmic mRNA deadenylation. Recruits the deadenylase PARN to the poly(A) tail of EDEN-containing mRNAs to promote their deadenylation. Required for completion of spermatogenesis. Binds to (CUG)n triplet repeats in the 3'-UTR of transcripts such as DMPK and to Bruno response elements (BREs). Binds to muscle-specific splicing enhancer (MSE) intronic sites flanking the alternative exon 5 of TNNT2 pre-mRNA. Binds to AU-rich sequences (AREs or EDEN-like) localized in the 3'-UTR of JUN and FOS mRNAs. Binds to the IR RNA. Binds to the 5'-region of CDKN1A and CEBPB mRNAs. Binds with the 5'-region of CEBPB mRNA in aging liver. May be a specific regulator of miRNA biogenesis. Binds to primary microRNA pri-MIR140 and, with CELF2, negatively regulates the processing to mature miRNA. This chain is CUGBP Elav-like family member 1 (CELF1), found in Homo sapiens (Human).